The chain runs to 785 residues: Phenylalanine--tRNA ligase beta subunit (785 aa).

The 110-residue stretch at 39–148 (APAFSGVVIA…ADAPVGQSIR (110 aa)) folds into the tRNA-binding domain. The B5 domain maps to 399-474 (PKRQAVQLRA…RVYGYNNIPA (76 aa)). The Mg(2+) site is built by aspartate 452, aspartate 458, glutamate 461, and glutamate 462. An FDX-ACB domain is found at 692–784 (SKFQPVRRDL…AASELGAQLR (93 aa)).

The protein belongs to the phenylalanyl-tRNA synthetase beta subunit family. Type 1 subfamily. As to quaternary structure, tetramer of two alpha and two beta subunits. It depends on Mg(2+) as a cofactor.

It localises to the cytoplasm. The enzyme catalyses tRNA(Phe) + L-phenylalanine + ATP = L-phenylalanyl-tRNA(Phe) + AMP + diphosphate + H(+). The protein is Phenylalanine--tRNA ligase beta subunit of Chromobacterium violaceum (strain ATCC 12472 / DSM 30191 / JCM 1249 / CCUG 213 / NBRC 12614 / NCIMB 9131 / NCTC 9757 / MK).